We begin with the raw amino-acid sequence, 76 residues long: Small ribosomal subunit protein bS18 (76 aa).

It belongs to the bacterial ribosomal protein bS18 family. Part of the 30S ribosomal subunit. Forms a tight heterodimer with protein bS6.

Binds as a heterodimer with protein bS6 to the central domain of the 16S rRNA, where it helps stabilize the platform of the 30S subunit. This is Small ribosomal subunit protein bS18 from Neisseria gonorrhoeae (strain ATCC 700825 / FA 1090).